We begin with the raw amino-acid sequence, 253 residues long: Isoprenyl transferase (253 aa).

D32 is an active-site residue. Mg(2+) is bound at residue D32. Substrate contacts are provided by residues 33–36, W37, R45, H49, and 77–79; these read GNGR and STE. N80 functions as the Proton acceptor in the catalytic mechanism. Substrate contacts are provided by residues W81, R83, R200, and 206 to 208; that span reads RLS. Residue E219 participates in Mg(2+) binding.

This sequence belongs to the UPP synthase family. In terms of assembly, homodimer. Requires Mg(2+) as cofactor.

Catalyzes the condensation of isopentenyl diphosphate (IPP) with allylic pyrophosphates generating different type of terpenoids. This chain is Isoprenyl transferase, found in Clostridium perfringens (strain 13 / Type A).